Here is a 524-residue protein sequence, read N- to C-terminus: Thioredoxin reductase 2, mitochondrial (524 aa).

The transit peptide at methionine 1 to alanine 34 directs the protein to the mitochondrion. Aspartate 41–tyrosine 70 provides a ligand contact to FAD. At lysine 79 the chain carries N6-succinyllysine. Cysteine 86 and cysteine 91 are joined by a disulfide. Residues lysine 175 and lysine 329 each carry the N6-succinyllysine modification. Catalysis depends on histidine 497, which acts as the Proton acceptor. The segment at residues cysteine 522–selenocysteine 523 is a cross-link (cysteinyl-selenocysteine (Cys-Sec)). A non-standard amino acid (selenocysteine) is located at residue selenocysteine 523.

This sequence belongs to the class-I pyridine nucleotide-disulfide oxidoreductase family. Homodimer. It depends on FAD as a cofactor. Expressed in liver, heart, testis and kidney.

The protein localises to the mitochondrion. It catalyses the reaction [thioredoxin]-dithiol + NADP(+) = [thioredoxin]-disulfide + NADPH + H(+). Involved in the control of reactive oxygen species levels and the regulation of mitochondrial redox homeostasis. Maintains thioredoxin in a reduced state. May play a role in redox-regulated cell signaling. This chain is Thioredoxin reductase 2, mitochondrial, found in Mus musculus (Mouse).